The following is a 931-amino-acid chain: Protocadherin gamma-A4 (931 aa).

Positions 1–28 (MAAPPARPDHTRLLHICLLLGVLVEIRA) are cleaved as a signal peptide. Cadherin domains follow at residues 29 to 133 (EQIR…PPSF), 134 to 242 (GTEQ…APVF), 243 to 347 (TQPE…APEV), 348 to 452 (TVTS…PPTF), 453 to 567 (PHAS…YPTF), and 570 to 682 (DDST…KPSA). Topologically, residues 29–692 (EQIRYSVFEE…DPDDSGLTLY (664 aa)) are extracellular. N-linked (GlcNAc...) asparagine glycans are attached at residues asparagine 419 and asparagine 545. Residues 693-713 (LVVSVAAVSCVFLAFVTVLLA) form a helical membrane-spanning segment. The Cytoplasmic segment spans residues 714-931 (LKLRRWHKSR…KKKSGKKEKK (218 aa)). 2 disordered regions span residues 801–840 (KGDP…WPNN) and 901–931 (ATLT…KEKK). Residues 805–840 (NLQQAPPNTDWRFSQAQRPGTSGSQNGDDTGTWPNN) show a composition bias toward polar residues. The span at 921-931 (NKKKSGKKEKK) shows a compositional bias: basic residues.

Its subcellular location is the cell membrane. Its function is as follows. Potential calcium-dependent cell-adhesion protein. May be involved in the establishment and maintenance of specific neuronal connections in the brain. The chain is Protocadherin gamma-A4 (PCDHGA4) from Pan troglodytes (Chimpanzee).